A 451-amino-acid chain; its full sequence is Probable NADH dehydrogenase (451 aa).

FAD is bound at residue 41 to 71 (KLIILGCGWGSYSFLKNLNSIKYDITVISPR). 199-236 (LSFVIVGGGATGIEFTSELNDFFSEDLSRLFPFVPVNE) lines the NAD(+) pocket.

Belongs to the NADH dehydrogenase family. FAD is required as a cofactor.

The enzyme catalyses a ubiquinone + NADH + 5 H(+)(in) = a ubiquinol + NAD(+) + 4 H(+)(out). This is Probable NADH dehydrogenase from Dictyostelium discoideum (Social amoeba).